Reading from the N-terminus, the 636-residue chain is Sodium-dependent proline transporter (636 aa).

Topologically, residues Met-1–Asp-45 are cytoplasmic. Thr-20 carries the phosphothreonine modification. Position 22 is a phosphoserine (Ser-22). Transmembrane regions (helical) follow at residues Phe-46–Arg-66, Ala-74–Leu-93, and Gly-117–Ile-137. The Extracellular portion of the chain corresponds to Ala-138–Arg-214. Residue Asn-182 is glycosylated (N-linked (GlcNAc...) asparagine). 9 helical membrane passes run Trp-215–Leu-233, Val-242–Val-259, Ile-295–Tyr-312, Phe-324–Leu-345, Leu-378–Leu-397, Val-425–Thr-443, Ser-459–Ile-479, Ala-500–Val-519, and Leu-538–Val-556. Residues Ala-557 to Met-636 are Cytoplasmic-facing. Ser-573 and Ser-582 each carry phosphoserine. Thr-588 carries the post-translational modification Phosphothreonine. Phosphotyrosine is present on Tyr-591. Phosphoserine is present on residues Ser-598 and Ser-600.

This sequence belongs to the sodium:neurotransmitter symporter (SNF) (TC 2.A.22) family. SLC6A7 subfamily. Brain specific (at protein level). Highly expressed in hippocampus, corpus striatum and temporal cortex. Also expressed in frontal cortex, occipital cortex and, at lower levels, in cerebellum and parietal cortex (at protein level).

It localises to the synaptic cell membrane. It carries out the reaction L-proline(out) + chloride(out) + 2 Na(+)(out) = L-proline(in) + chloride(in) + 2 Na(+)(in). The catalysed reaction is L-pipecolate(out) + chloride(out) + 2 Na(+)(out) = L-pipecolate(in) + chloride(in) + 2 Na(+)(in). In terms of biological role, brain specific sodium (and chloride)-dependent proline transporter. Terminates the action of proline by its high affinity sodium-dependent reuptake into presynaptic terminals. This chain is Sodium-dependent proline transporter, found in Homo sapiens (Human).